The primary structure comprises 313 residues: Serine/threonine-protein kinase SZE1 (313 aa).

The N-myristoyl glycine moiety is linked to residue G2. Residues 43–311 enclose the Protein kinase domain; it reads MELGESLGYI…EVLDNLNAIA (269 aa). ATP is bound by residues 49 to 57 and K71; that span reads LGYINPKTL.

This sequence belongs to the protein kinase superfamily. Ser/Thr protein kinase family. Component of an immune signaling complex made of, at least, SZE1, BKN2/SZE2, ZAR1 and ZED1. Interacts directly with ZED1, ZAR1 and Pseudomonas syringae HOPZ1A at the plasma membrane. N-terminal myristoylation is critical for plasma membrane localization and implication in defense responses. In terms of processing, autophosphorylated. In terms of tissue distribution, expressed in roots, seedlings, rosette leaves, floral organs, siliques and inflorescence stems.

Its subcellular location is the cell membrane. The catalysed reaction is L-seryl-[protein] + ATP = O-phospho-L-seryl-[protein] + ADP + H(+). It carries out the reaction L-threonyl-[protein] + ATP = O-phospho-L-threonyl-[protein] + ADP + H(+). Together with BKN2/SZE2 and ZED1, required for effector-triggered immunity (e.g. Pseudomonas syringae effector type III HopZ1a) via the activation of ZAR1, thus being essential for resistance against P.syringae pv. tomato DC3000 expressing HopZ1a. This Arabidopsis thaliana (Mouse-ear cress) protein is Serine/threonine-protein kinase SZE1.